Consider the following 379-residue polypeptide: UPF0450 protein C17orf58 homolog (379 aa).

Residues 1–17 (MIPALTVPLLFLCATSA) form the signal peptide. 2 disordered regions span residues 76–95 (RTRA…PDKT) and 162–194 (TASQ…MNPH). Positions 180–194 (SMDHESNRPGKMNPH) are enriched in basic and acidic residues. Disulfide bonds link C234/C308, C238/C312, and C249/C378. In terms of domain architecture, NTR spans 234–378 (CIAECHRDKD…KVLAAAHSKC (145 aa)).

The protein belongs to the UPF0450 family.

The sequence is that of UPF0450 protein C17orf58 homolog from Xenopus laevis (African clawed frog).